The sequence spans 148 residues: 3-dehydroquinate dehydratase (148 aa).

3 residues coordinate substrate: Asn-74, His-80, and Asp-87. The Proton donor role is filled by His-100. Substrate-binding positions include 101-102 (LS) and Arg-111.

The protein belongs to the type-II 3-dehydroquinase family. In terms of assembly, homododecamer.

It catalyses the reaction 3-dehydroquinate = 3-dehydroshikimate + H2O. The protein operates within metabolic intermediate biosynthesis; chorismate biosynthesis; chorismate from D-erythrose 4-phosphate and phosphoenolpyruvate: step 3/7. This chain is 3-dehydroquinate dehydratase (yqhS), found in Bacillus subtilis (strain 168).